Here is a 1293-residue protein sequence, read N- to C-terminus: Enterobactin synthase component F (1293 aa).

The tract at residues 1-301 is elongation/condensation; sequence MSQHLPLVAA…NVLPLGIHIA (301 aa). The adenylatione stretch occupies residues 482 to 887; it reads SYREMREQVV…ALPDVEQAVT (406 aa). A Carrier domain is found at 971–1046; that stretch reads APKAGSETII…KLATIIDAEE (76 aa). Ser1006 bears the O-(pantetheine 4'-phosphoryl)serine mark. The segment at 1066–1293 is thioesterase; the sequence is PTLFCFHPAS…GPIIRATLNR (228 aa). Residue His1271 is the Proton acceptor; for thioesterase activity of the active site.

The protein belongs to the ATP-dependent AMP-binding enzyme family. EntF subfamily. In terms of assembly, proteins EntB, EntD, EntE and EntF are the component of the enterobactin synthase. Components probably do not form a stable complex. EntF acts as a catalytic monomer. Interacts with the MbtH-like protein YbdZ. YbdZ binds to the adenylation domain, but does not alter the structure of the domain. Requires pantetheine 4'-phosphate as cofactor. In terms of processing, 4'-phosphopantetheine is transferred from CoA to a specific serine of apo-EntF by EntD. Holo-EntF so formed is then acylated with seryl-AMP.

The protein resides in the cytoplasm. It carries out the reaction 3 2,3-dihydroxybenzoate + 3 L-serine + 6 ATP = enterobactin + 6 AMP + 6 diphosphate + 4 H(+). The enzyme catalyses holo-[peptidyl-carrier protein] + L-serine + ATP = L-seryl-[peptidyl-carrier protein] + AMP + diphosphate. It participates in siderophore biosynthesis; enterobactin biosynthesis. Its activity is regulated as follows. Adenylation activity is increased in the presence of the MbtH-like protein YbdZ. Functionally, involved in the biosynthesis of the siderophore enterobactin (enterochelin), which is a macrocyclic trimeric lactone of N-(2,3-dihydroxybenzoyl)-serine. EntF catalyzes the activation of L-serine via ATP-dependent PPi exchange reaction to form seryladenylate. Activated L-serine is loaded onto the peptidyl carrier domain via a thioester linkage to the phosphopanthetheine moiety, forming seryl-S-Ppant-EntF. EntF acts then as the sole catalyst for the formation of the three amide and three ester linkages found in enterobactin, using seryladenylate and 2,3-dihydroxybenzoate-S-Ppant-EntB (DHB-S-Ppant-EntB) as substrates, via the formation of a DHB-Ser-S-Ppant-EntF intermediate. The sequence is that of Enterobactin synthase component F from Escherichia coli (strain K12).